The chain runs to 504 residues: D-alanine--D-alanyl carrier protein ligase (504 aa).

152 to 153 (TS) serves as a coordination point for ATP. Aspartate 197 contacts D-alanine. 292-297 (NTYGPT) contributes to the ATP binding site. Valine 301 serves as a coordination point for D-alanine. Residues aspartate 383, 394-397 (YNGR), and lysine 492 each bind ATP. A D-alanine-binding site is contributed by lysine 492.

It belongs to the ATP-dependent AMP-binding enzyme family. DltA subfamily.

It is found in the cytoplasm. It catalyses the reaction holo-[D-alanyl-carrier protein] + D-alanine + ATP = D-alanyl-[D-alanyl-carrier protein] + AMP + diphosphate. It functions in the pathway cell wall biogenesis; lipoteichoic acid biosynthesis. In terms of biological role, catalyzes the first step in the D-alanylation of lipoteichoic acid (LTA), the activation of D-alanine and its transfer onto the D-alanyl carrier protein (Dcp) DltC. In an ATP-dependent two-step reaction, forms a high energy D-alanyl-AMP intermediate, followed by transfer of the D-alanyl residue as a thiol ester to the phosphopantheinyl prosthetic group of the Dcp. D-alanylation of LTA plays an important role in modulating the properties of the cell wall in Gram-positive bacteria, influencing the net charge of the cell wall. The polypeptide is D-alanine--D-alanyl carrier protein ligase (Bacillus cereus (strain ATCC 10987 / NRS 248)).